A 280-amino-acid chain; its full sequence is Transcription factor MYB46 (280 aa).

HTH myb-type domains are found at residues 15–67 and 68–122; these read VKKM…INYL and RPDL…KKRL. 2 DNA-binding regions (H-T-H motif) span residues 43–67 and 95–118; these read WSDV…INYL and WSQI…NSTI. Residues 129–150 are disordered; the sequence is SNLINNSSSSPNTASDSSSNSA.

Expressed at low levels in stems and siliques, specifically in xylem.

It is found in the nucleus. Transcription activator. Involved in the regulation of secondary wall biosynthesis in fibers and vessels. Transcription activator of the mannan synthase CSLA9 that recognizes and binds to the DNA consensus sequence 5'-[AG][GT]T[AT]GGT[GA]-3' cis-regulatory element of CSLA9 promoter. Transcription factor that acts as a molecular switch in the NAC012/SND1-mediated transcriptional network regulating secondary wall biosynthesis. Is directly activated by NAC012/SND1. Functions redundantly with MYB83 in the transcriptional regulatory cascade leading to secondary wall formation in fibers and vessels. Transcription activator that binds to the DNA consensus sequence 5'-ACC[AT]A[AC][TC]-3', designated as the secondary wall MYB-responsive element (SMRE). Regulates directly numerous transcription factors and a number of genes involved in secondary wall biosynthesis that contain SMRE elements in their promoters. Is an obligate component of the transcriptional regulatory complex toward the commitment of secondary wall cellulose synthesis. Is required for functional expression of the three secondary wall CESA genes, CESA4, CESA7 and CESA8. In Arabidopsis thaliana (Mouse-ear cress), this protein is Transcription factor MYB46.